The sequence spans 103 residues: Cobalt transport protein CbiN (103 aa).

2 helical membrane passes run 6–26 and 68–88; these read VLTNVILLLLVVFITIIPFFV and LLFALQAAIGAGVIGFGLGYL.

The protein belongs to the CbiN family. Forms an energy-coupling factor (ECF) transporter complex composed of an ATP-binding protein (A component, CbiO), a transmembrane protein (T component, CbiQ) and 2 possible substrate-capture proteins (S components, CbiM and CbiN) of unknown stoichimetry.

Its subcellular location is the cell membrane. The protein operates within cofactor biosynthesis; adenosylcobalamin biosynthesis. Its function is as follows. Part of the energy-coupling factor (ECF) transporter complex CbiMNOQ involved in cobalt import. The polypeptide is Cobalt transport protein CbiN (Clostridium perfringens (strain 13 / Type A)).